We begin with the raw amino-acid sequence, 372 residues long: GDP-mannose 4,6 dehydratase (372 aa).

The disordered stretch occupies residues 1 to 22 (MAHAPASCPSSRNSGDGDKGKP). The residue at position 2 (A2) is an N-acetylalanine. NADP(+)-binding positions include 30–35 (GITGQD), 55–58 (RRSS), 86–87 (DL), 108–112 (LGAQS), and Y123. The active site involves T155. Catalysis depends on nucleophile residues E157 and Y179. Residues K183, H209, and R214 each coordinate NADP(+). The residue at position 323 (Y323) is a Phosphotyrosine.

It belongs to the NAD(P)-dependent epimerase/dehydratase family. GDP-mannose 4,6-dehydratase subfamily. Requires NADP(+) as cofactor.

It carries out the reaction GDP-alpha-D-mannose = GDP-4-dehydro-alpha-D-rhamnose + H2O. The protein operates within nucleotide-sugar biosynthesis; GDP-L-fucose biosynthesis via de novo pathway; GDP-L-fucose from GDP-alpha-D-mannose: step 1/2. Inhibited by GDP-fucose. Its function is as follows. Catalyzes the conversion of GDP-D-mannose to GDP-4-dehydro-6-deoxy-D-mannose. The chain is GDP-mannose 4,6 dehydratase (GMDS) from Cricetulus griseus (Chinese hamster).